The following is a 283-amino-acid chain: MYIAHTIDELRSHLAAFRRPAFVPTMGNLHEGHLALVKQAKPLGDVTVASIFVNRLQFLPHEDFDTYPRTWDSDCEKLRTAGCGVLFAPDEKALYPEPQTCKVHPDPALADILEGHFRPGFFVGVCTVVMKLFQCVQPRVAVFGKKDYQQLMMIRHMVRQFALPIEIVGSETFRADDGLALSSRNGYLSEAERAEAVQLSKALKAMAQAVQAGERDLAAIEARAMQALAQRGWQPDYLVLRRRSDLQAPSSANLAGEPLVALAAARLGGTRLIDNLEIDAMPS.

26 to 33 (MGNLHEGH) provides a ligand contact to ATP. Catalysis depends on His33, which acts as the Proton donor. Gln57 contributes to the (R)-pantoate binding site. Gln57 lines the beta-alanine pocket. 144–147 (GKKD) is a binding site for ATP. Gln150 contributes to the (R)-pantoate binding site. 181–184 (LSSR) lines the ATP pocket.

It belongs to the pantothenate synthetase family. As to quaternary structure, homodimer.

The protein resides in the cytoplasm. The catalysed reaction is (R)-pantoate + beta-alanine + ATP = (R)-pantothenate + AMP + diphosphate + H(+). It functions in the pathway cofactor biosynthesis; (R)-pantothenate biosynthesis; (R)-pantothenate from (R)-pantoate and beta-alanine: step 1/1. In terms of biological role, catalyzes the condensation of pantoate with beta-alanine in an ATP-dependent reaction via a pantoyl-adenylate intermediate. The chain is Pantothenate synthetase from Variovorax paradoxus (strain S110).